The primary structure comprises 371 residues: Queuine tRNA-ribosyltransferase (371 aa).

D89 (proton acceptor) is an active-site residue. Residues 89 to 93, D143, Q185, and G212 each bind substrate; that span reads DSGGF. An RNA binding region spans residues 243–249; that stretch reads GVGKPED. The active-site Nucleophile is the D262. The RNA binding; important for wobble base 34 recognition stretch occupies residues 267–271; that stretch reads TRNAR. Zn(2+) contacts are provided by C300, C302, C305, and H331.

Belongs to the queuine tRNA-ribosyltransferase family. Homodimer. Within each dimer, one monomer is responsible for RNA recognition and catalysis, while the other monomer binds to the replacement base PreQ1. Zn(2+) is required as a cofactor.

It carries out the reaction 7-aminomethyl-7-carbaguanine + guanosine(34) in tRNA = 7-aminomethyl-7-carbaguanosine(34) in tRNA + guanine. Its pathway is tRNA modification; tRNA-queuosine biosynthesis. Its function is as follows. Catalyzes the base-exchange of a guanine (G) residue with the queuine precursor 7-aminomethyl-7-deazaguanine (PreQ1) at position 34 (anticodon wobble position) in tRNAs with GU(N) anticodons (tRNA-Asp, -Asn, -His and -Tyr). Catalysis occurs through a double-displacement mechanism. The nucleophile active site attacks the C1' of nucleotide 34 to detach the guanine base from the RNA, forming a covalent enzyme-RNA intermediate. The proton acceptor active site deprotonates the incoming PreQ1, allowing a nucleophilic attack on the C1' of the ribose to form the product. After dissociation, two additional enzymatic reactions on the tRNA convert PreQ1 to queuine (Q), resulting in the hypermodified nucleoside queuosine (7-(((4,5-cis-dihydroxy-2-cyclopenten-1-yl)amino)methyl)-7-deazaguanosine). The protein is Queuine tRNA-ribosyltransferase of Pseudomonas putida (strain ATCC 47054 / DSM 6125 / CFBP 8728 / NCIMB 11950 / KT2440).